A 943-amino-acid polypeptide reads, in one-letter code: Isoleucine--tRNA ligase (943 aa).

The 'HIGH' region motif lies at 59–69 (PYANGQIHLGH). Glu577 is an L-isoleucyl-5'-AMP binding site. Positions 618-622 (KMSKS) match the 'KMSKS' region motif. Lys621 serves as a coordination point for ATP. Residues Cys906, Cys909, Cys926, and Cys929 each coordinate Zn(2+).

It belongs to the class-I aminoacyl-tRNA synthetase family. IleS type 1 subfamily. Monomer. The cofactor is Zn(2+).

Its subcellular location is the cytoplasm. The enzyme catalyses tRNA(Ile) + L-isoleucine + ATP = L-isoleucyl-tRNA(Ile) + AMP + diphosphate. Its function is as follows. Catalyzes the attachment of isoleucine to tRNA(Ile). As IleRS can inadvertently accommodate and process structurally similar amino acids such as valine, to avoid such errors it has two additional distinct tRNA(Ile)-dependent editing activities. One activity is designated as 'pretransfer' editing and involves the hydrolysis of activated Val-AMP. The other activity is designated 'posttransfer' editing and involves deacylation of mischarged Val-tRNA(Ile). The polypeptide is Isoleucine--tRNA ligase (Xanthomonas axonopodis pv. citri (strain 306)).